We begin with the raw amino-acid sequence, 397 residues long: Chalcone synthase 2 (397 aa).

Cys168 is a catalytic residue.

The protein belongs to the thiolase-like superfamily. Chalcone/stilbene synthases family.

It carries out the reaction (E)-4-coumaroyl-CoA + 3 malonyl-CoA + 3 H(+) = 2',4,4',6'-tetrahydroxychalcone + 3 CO2 + 4 CoA. It functions in the pathway secondary metabolite biosynthesis; flavonoid biosynthesis. Its function is as follows. The primary product of this enzyme is 4,2',4',6'-tetrahydroxychalcone (also termed naringenin-chalcone or chalcone) which can under specific conditions spontaneously isomerize into naringenin. This Daucus carota (Wild carrot) protein is Chalcone synthase 2 (CHS2).